We begin with the raw amino-acid sequence, 342 residues long: Gibberellin cluster GA4 desaturase (342 aa).

A disordered region spans residues 127–183 (PELAPPYPMPGKSSSGSKEREAIPANELPTTRAKGFQKGEEEGPVRKPHKDWGPSGA).

This sequence belongs to the asaB hydroxylase/desaturase family.

It participates in plant hormone biosynthesis; gibberellin biosynthesis. GA4 desaturase; part of the gene cluster that mediates the biosynthesis of gibberellins (GAs), diterpenoids that may provide a selective advantage during infection of the preferred host plant, rice. Gibberellins (GAs) are diterpenoids and are synthesized via the mevalonate pathway. Biosynthesis of the major metabolite GA3 (gibberellic acid) from geranylgeranyl diphosphate (GGPP) requires 13 steps. The GGPP produced by the geranylgeranyl diphosphate synthase GGS2 is converted to ent-kaurene via ent-copalyldiphosphate in a two-step cyclization reaction performed by the bifunctional ent-copalyl diphosphate synthase/ent-kaurene synthase enzyme (CPS/KS). Ent-Kaurene is metabolized to GAs by a series of oxidation reactions catalyzed by cytochrome P450 monooxygenases. Cytochrome P450 monooxygenase P450-4 is an ent-kaurene oxidase that catalyzes the three oxidation steps between ent-kaurene and ent-kaurenoic acid. The highly multifunctional cytochrome P450 monooxygenase P450-1 then catalyzes four steps involving oxidation at two carbon atoms, in the main pathway from ent-kaurenoic acid to GA14 via GA12-aldehyde as well as producing kaurenolides and fujenoic acids as by-products. The cytochrome P450 monooxygenase P450-2 then converts GA14 to GA4 by removal of C-20. GA4 is further converted to GA7 by the GA4 desaturase DES via 1,2-desaturation before cytochrome P450 monooxygenase P450-3, a 13-hydroxylase, hydroxylates GA7 to GA3, the final product of the GA-biosynthetic pathway. The polypeptide is Gibberellin cluster GA4 desaturase (Gibberella fujikuroi (strain CBS 195.34 / IMI 58289 / NRRL A-6831) (Bakanae and foot rot disease fungus)).